We begin with the raw amino-acid sequence, 158 residues long: NADH-quinone oxidoreductase subunit B (158 aa).

The [4Fe-4S] cluster site is built by cysteine 36, cysteine 37, cysteine 101, and cysteine 131.

The protein belongs to the complex I 20 kDa subunit family. As to quaternary structure, NDH-1 is composed of 14 different subunits. Subunits NuoB, C, D, E, F, and G constitute the peripheral sector of the complex. Requires [4Fe-4S] cluster as cofactor.

It is found in the cell inner membrane. The enzyme catalyses a quinone + NADH + 5 H(+)(in) = a quinol + NAD(+) + 4 H(+)(out). Its function is as follows. NDH-1 shuttles electrons from NADH, via FMN and iron-sulfur (Fe-S) centers, to quinones in the respiratory chain. The immediate electron acceptor for the enzyme in this species is believed to be ubiquinone. Couples the redox reaction to proton translocation (for every two electrons transferred, four hydrogen ions are translocated across the cytoplasmic membrane), and thus conserves the redox energy in a proton gradient. The chain is NADH-quinone oxidoreductase subunit B from Francisella tularensis subsp. tularensis (strain FSC 198).